The sequence spans 522 residues: Protein nucleotidyltransferase YdiU (522 aa).

ATP is bound by residues Gly-109, Gly-111, Arg-112, Lys-132, Asp-144, Gly-145, Arg-195, and Arg-202. Asp-271 acts as the Proton acceptor in catalysis. Mg(2+) contacts are provided by Asn-272 and Asp-281. Asp-281 lines the ATP pocket.

The protein belongs to the SELO family. Mg(2+) is required as a cofactor. Requires Mn(2+) as cofactor.

The enzyme catalyses L-seryl-[protein] + ATP = 3-O-(5'-adenylyl)-L-seryl-[protein] + diphosphate. It carries out the reaction L-threonyl-[protein] + ATP = 3-O-(5'-adenylyl)-L-threonyl-[protein] + diphosphate. It catalyses the reaction L-tyrosyl-[protein] + ATP = O-(5'-adenylyl)-L-tyrosyl-[protein] + diphosphate. The catalysed reaction is L-histidyl-[protein] + UTP = N(tele)-(5'-uridylyl)-L-histidyl-[protein] + diphosphate. The enzyme catalyses L-seryl-[protein] + UTP = O-(5'-uridylyl)-L-seryl-[protein] + diphosphate. It carries out the reaction L-tyrosyl-[protein] + UTP = O-(5'-uridylyl)-L-tyrosyl-[protein] + diphosphate. Nucleotidyltransferase involved in the post-translational modification of proteins. It can catalyze the addition of adenosine monophosphate (AMP) or uridine monophosphate (UMP) to a protein, resulting in modifications known as AMPylation and UMPylation. The polypeptide is Protein nucleotidyltransferase YdiU (Burkholderia multivorans (strain ATCC 17616 / 249)).